Consider the following 81-residue polypeptide: Large ribosomal subunit protein bL31B (81 aa).

The protein belongs to the bacterial ribosomal protein bL31 family. Type B subfamily. Part of the 50S ribosomal subunit.

This chain is Large ribosomal subunit protein bL31B, found in Exiguobacterium sibiricum (strain DSM 17290 / CCUG 55495 / CIP 109462 / JCM 13490 / 255-15).